The primary structure comprises 227 residues: Endo-1,4-beta-xylanase 1 (227 aa).

An N-terminal signal peptide occupies residues 1-19 (MVSLKSVLAAATAVSSAIA). The GH11 domain occupies 37–225 (QVTPNAEGWH…SSGESDIYVQ (189 aa)). E121 functions as the Nucleophile in the catalytic mechanism. E212 functions as the Proton donor in the catalytic mechanism.

Belongs to the glycosyl hydrolase 11 (cellulase G) family.

It carries out the reaction Endohydrolysis of (1-&gt;4)-beta-D-xylosidic linkages in xylans.. The protein operates within glycan degradation; xylan degradation. This chain is Endo-1,4-beta-xylanase 1, found in Humicola insolens (Soft-rot fungus).